The primary structure comprises 602 residues: Cholinesterase (602 aa).

The first 28 residues, 1–28 (MQSRSTVIYIRFVLWFLLLWVLFEKSHT), serve as a signal peptide directing secretion. N-linked (GlcNAc...) asparagine glycans are attached at residues Asn85 and Asn134. 144–145 (GS) is a binding site for substrate. The active-site Acyl-ester intermediate is Ser226. Ser226 bears the Phosphoserine mark. Asn269 and Asn284 each carry an N-linked (GlcNAc...) asparagine glycan. The active-site Charge relay system is Glu353. An N-linked (GlcNAc...) asparagine glycan is attached at Asn369. Catalysis depends on His466, which acts as the Charge relay system. Residues Asn483, Asn509, Asn513, and Asn514 are each glycosylated (N-linked (GlcNAc...) asparagine).

The protein belongs to the type-B carboxylesterase/lipase family. In terms of assembly, homotetramer; disulfide-linked. Dimer of dimers. In terms of tissue distribution, present in most cells except erythrocytes.

It is found in the secreted. It catalyses the reaction an acylcholine + H2O = a carboxylate + choline + H(+). In terms of biological role, esterase with broad substrate specificity. Contributes to the inactivation of the neurotransmitter acetylcholine. Can degrade neurotoxic organophosphate esters. The polypeptide is Cholinesterase (BCHE) (Bos taurus (Bovine)).